The chain runs to 265 residues: Thiazole synthase (265 aa).

Catalysis depends on K106, which acts as the Schiff-base intermediate with DXP. 1-deoxy-D-xylulose 5-phosphate contacts are provided by residues G167, 193-194 (AG), and 215-216 (NS).

This sequence belongs to the ThiG family. In terms of assembly, homotetramer. Forms heterodimers with either ThiH or ThiS.

The protein localises to the cytoplasm. It catalyses the reaction [ThiS sulfur-carrier protein]-C-terminal-Gly-aminoethanethioate + 2-iminoacetate + 1-deoxy-D-xylulose 5-phosphate = [ThiS sulfur-carrier protein]-C-terminal Gly-Gly + 2-[(2R,5Z)-2-carboxy-4-methylthiazol-5(2H)-ylidene]ethyl phosphate + 2 H2O + H(+). The protein operates within cofactor biosynthesis; thiamine diphosphate biosynthesis. In terms of biological role, catalyzes the rearrangement of 1-deoxy-D-xylulose 5-phosphate (DXP) to produce the thiazole phosphate moiety of thiamine. Sulfur is provided by the thiocarboxylate moiety of the carrier protein ThiS. In vitro, sulfur can be provided by H(2)S. This is Thiazole synthase from Prochlorococcus marinus (strain MIT 9515).